The primary structure comprises 440 residues: Thymidine phosphorylase (440 aa).

It belongs to the thymidine/pyrimidine-nucleoside phosphorylase family. In terms of assembly, homodimer.

The catalysed reaction is thymidine + phosphate = 2-deoxy-alpha-D-ribose 1-phosphate + thymine. The protein operates within pyrimidine metabolism; dTMP biosynthesis via salvage pathway; dTMP from thymine: step 1/2. Its function is as follows. The enzymes which catalyze the reversible phosphorolysis of pyrimidine nucleosides are involved in the degradation of these compounds and in their utilization as carbon and energy sources, or in the rescue of pyrimidine bases for nucleotide synthesis. In Rhizobium meliloti (strain 1021) (Ensifer meliloti), this protein is Thymidine phosphorylase.